The primary structure comprises 245 residues: MYPVDLHMHTVASTHAYSTLSDYIAEAKRKGIKLFAITDHGPDMEDAPHHWHFINMRIWPRLVDGVGILRGIEANIKNINGEIDCSGKMFDSLDLIIAGFHEPVFAPHDKETNTQAMIATIASGKVHIISHPGNPKYPVEVKAIAQAAAKHHVALEINNSSFLHSRKGSEDNCRAVAAAVRDAGGWVALGSDSHTAFTLGDFTECRKILDAVNFPEDRILNVSPQCLLAFLESRGMAPVPEFAEL.

Positions 7, 9, 15, 40, 73, 101, 131, 192, and 194 each coordinate Zn(2+).

This sequence belongs to the PHP family. In terms of assembly, homotrimer. Zn(2+) serves as cofactor.

The protein is Probable phosphatase YcdX of Salmonella heidelberg (strain SL476).